The primary structure comprises 322 residues: Pilin gene-inverting protein (322 aa).

In terms of biological role, may be the site-specific invertase required for pilin gene inversion. Moraxella can express either a Q or I pilin; the inversion of 2 kb of DNA determines which pilin is expressed. The chain is Pilin gene-inverting protein (piv) from Moraxella lacunata.